Reading from the N-terminus, the 173-residue chain is Large ribosomal RNA subunit accumulation protein YceD (173 aa).

This sequence belongs to the DUF177 domain family.

In terms of biological role, plays a role in synthesis, processing and/or stability of 23S rRNA. The chain is Large ribosomal RNA subunit accumulation protein YceD (yceD) from Escherichia coli O157:H7.